A 253-amino-acid chain; its full sequence is Imidazole glycerol phosphate synthase subunit HisF (253 aa).

Active-site residues include D11 and D130.

It belongs to the HisA/HisF family. As to quaternary structure, heterodimer of HisH and HisF.

The protein localises to the cytoplasm. The catalysed reaction is 5-[(5-phospho-1-deoxy-D-ribulos-1-ylimino)methylamino]-1-(5-phospho-beta-D-ribosyl)imidazole-4-carboxamide + L-glutamine = D-erythro-1-(imidazol-4-yl)glycerol 3-phosphate + 5-amino-1-(5-phospho-beta-D-ribosyl)imidazole-4-carboxamide + L-glutamate + H(+). Its pathway is amino-acid biosynthesis; L-histidine biosynthesis; L-histidine from 5-phospho-alpha-D-ribose 1-diphosphate: step 5/9. Functionally, IGPS catalyzes the conversion of PRFAR and glutamine to IGP, AICAR and glutamate. The HisF subunit catalyzes the cyclization activity that produces IGP and AICAR from PRFAR using the ammonia provided by the HisH subunit. The chain is Imidazole glycerol phosphate synthase subunit HisF from Clostridium botulinum (strain 657 / Type Ba4).